A 146-amino-acid chain; its full sequence is Acetyl-CoA decarbonylase/synthase complex subunit epsilon (146 aa).

The protein belongs to the CdhB family. Heterotetramer of two alpha and two epsilon subunits. The ACDS complex is made up of alpha, epsilon, beta, gamma and delta subunits with a probable stoichiometry of (alpha(2)epsilon(2))(4)-beta(8)-(gamma(1)delta(1))(8).

Functionally, part of a complex that catalyzes the reversible cleavage of acetyl-CoA, allowing autotrophic growth from CO(2). The alpha-epsilon subcomponent functions as a carbon monoxide dehydrogenase. The precise role of the epsilon subunit is unclear; it may have a stabilizing role within the alpha(2)epsilon(2) component and/or be involved in electron transfer to FAD during a potential FAD-mediated CO oxidation. The protein is Acetyl-CoA decarbonylase/synthase complex subunit epsilon of Methanocaldococcus jannaschii (strain ATCC 43067 / DSM 2661 / JAL-1 / JCM 10045 / NBRC 100440) (Methanococcus jannaschii).